The sequence spans 449 residues: Intestinal acid phosphatase (449 aa).

Positions 1–19 (MVSAISIVAIFALEGFVTT) are cleaved as a signal peptide. Residues 20-428 (YSDGTKDLVF…TDLNKSSSFA (409 aa)) lie on the Extracellular side of the membrane. Residue H36 is the Nucleophile of the active site. Residue D321 is the Proton donor of the active site. A helical transmembrane segment spans residues 429 to 449 (TVSMLFIAAILAINNNFLGLF).

This sequence belongs to the histidine acid phosphatase family. Homodimer. In terms of processing, the N-terminus is blocked. Expressed in the intestine, specifically on the edge of the gut lumen, in the 14 posterior cells of the intestine.

It is found in the membrane. It catalyses the reaction a phosphate monoester + H2O = an alcohol + phosphate. Acid phosphatase required for normal growth and development. Specifically required for normal gut differentiation. The polypeptide is Intestinal acid phosphatase (Caenorhabditis elegans).